A 491-amino-acid chain; its full sequence is Probable glycine dehydrogenase (decarboxylating) subunit 2 (491 aa).

Residue lysine 273 is modified to N6-(pyridoxal phosphate)lysine.

It belongs to the GcvP family. C-terminal subunit subfamily. The glycine cleavage system is composed of four proteins: P, T, L and H. In this organism, the P 'protein' is a heterodimer of two subunits. The cofactor is pyridoxal 5'-phosphate.

The catalysed reaction is N(6)-[(R)-lipoyl]-L-lysyl-[glycine-cleavage complex H protein] + glycine + H(+) = N(6)-[(R)-S(8)-aminomethyldihydrolipoyl]-L-lysyl-[glycine-cleavage complex H protein] + CO2. Functionally, the glycine cleavage system catalyzes the degradation of glycine. The P protein binds the alpha-amino group of glycine through its pyridoxal phosphate cofactor; CO(2) is released and the remaining methylamine moiety is then transferred to the lipoamide cofactor of the H protein. The sequence is that of Probable glycine dehydrogenase (decarboxylating) subunit 2 from Bacillus velezensis (strain DSM 23117 / BGSC 10A6 / LMG 26770 / FZB42) (Bacillus amyloliquefaciens subsp. plantarum).